The chain runs to 96 residues: UPF0235 protein MK0273 (96 aa).

The protein belongs to the UPF0235 family.

The sequence is that of UPF0235 protein MK0273 from Methanopyrus kandleri (strain AV19 / DSM 6324 / JCM 9639 / NBRC 100938).